The chain runs to 248 residues: UPF0736 protein BCE_1296 (248 aa).

Belongs to the UPF0736 family.

In Bacillus cereus (strain ATCC 10987 / NRS 248), this protein is UPF0736 protein BCE_1296.